We begin with the raw amino-acid sequence, 179 residues long: Large ribosomal subunit protein uL6 (179 aa).

Belongs to the universal ribosomal protein uL6 family. In terms of assembly, part of the 50S ribosomal subunit.

Functionally, this protein binds to the 23S rRNA, and is important in its secondary structure. It is located near the subunit interface in the base of the L7/L12 stalk, and near the tRNA binding site of the peptidyltransferase center. The protein is Large ribosomal subunit protein uL6 of Synechococcus sp. (strain RCC307).